Consider the following 338-residue polypeptide: UDP-N-acetylglucosamine--N-acetylmuramyl-(pentapeptide) pyrophosphoryl-undecaprenol N-acetylglucosamine transferase (338 aa).

UDP-N-acetyl-alpha-D-glucosamine-binding positions include 10-12 (TGG), asparagine 122, serine 177, and glutamine 275.

This sequence belongs to the glycosyltransferase 28 family. MurG subfamily.

The protein resides in the cell inner membrane. The catalysed reaction is di-trans,octa-cis-undecaprenyl diphospho-N-acetyl-alpha-D-muramoyl-L-alanyl-D-glutamyl-meso-2,6-diaminopimeloyl-D-alanyl-D-alanine + UDP-N-acetyl-alpha-D-glucosamine = di-trans,octa-cis-undecaprenyl diphospho-[N-acetyl-alpha-D-glucosaminyl-(1-&gt;4)]-N-acetyl-alpha-D-muramoyl-L-alanyl-D-glutamyl-meso-2,6-diaminopimeloyl-D-alanyl-D-alanine + UDP + H(+). It participates in cell wall biogenesis; peptidoglycan biosynthesis. Cell wall formation. Catalyzes the transfer of a GlcNAc subunit on undecaprenyl-pyrophosphoryl-MurNAc-pentapeptide (lipid intermediate I) to form undecaprenyl-pyrophosphoryl-MurNAc-(pentapeptide)GlcNAc (lipid intermediate II). The sequence is that of UDP-N-acetylglucosamine--N-acetylmuramyl-(pentapeptide) pyrophosphoryl-undecaprenol N-acetylglucosamine transferase from Sulfurovum sp. (strain NBC37-1).